We begin with the raw amino-acid sequence, 262 residues long: MPAGVAAWRRDRRHAGTARPARCADTALFRTNPQLEKYEMNALLAGLTLLIIGDSHVTFKDSLLSVLPDEFTKQGAKVVTYGVCSSTAADWVVPNPNNGCGAAERVGDAPIGAPDMKPASPPPITSLIEKWHPNVVMVILGDTMAAYGQNAVSKDWVDEQVKTLTYAIGKTACIWVGPTWGQFSPRYGKTDQRATEMASFLKGEVAPCSYVDGTALLKQGSVNTIDGIHATPESYRVWGDAIVQATLPELEKLKDAPPAPAQ.

Its pathway is glycan metabolism; bacterial cellulose biosynthesis. The protein is Protein BcsX (bcsX) of Komagataeibacter xylinus (Gluconacetobacter xylinus).